A 282-amino-acid chain; its full sequence is Predicted GPI-anchored protein 23 (282 aa).

The N-terminal stretch at 1–18 (MRVSTLVLSTSIIPIATA) is a signal peptide. The tract at residues 163-264 (GQETSGAGSL…SSNSSSSAGM (102 aa)) is disordered. N-linked (GlcNAc...) asparagine glycosylation is found at Asn180, Asn192, and Asn257. Positions 186-216 (GGSGSSNGTSSGSGSGSGAGVGSGSGSGSGS) are enriched in gly residues. A compositionally biased stretch (low complexity) spans 236 to 264 (LGISSSISQSTTRQLQTSGSSNSSSSAGM). Ser259 is lipidated: GPI-anchor amidated serine. Positions 260-282 (SSAGMGNVVVGMNAVALAALVLI) are cleaved as a propeptide — removed in mature form.

The protein localises to the cell membrane. In terms of biological role, probable cell surface protein involved in the process of adhesion and early events of invasion. The chain is Predicted GPI-anchored protein 23 (PGA23) from Candida albicans (strain SC5314 / ATCC MYA-2876) (Yeast).